The following is a 405-amino-acid chain: Serine--glyoxylate aminotransferase (405 aa).

At Lys196 the chain carries N6-(pyridoxal phosphate)lysine.

This sequence belongs to the class-V pyridoxal-phosphate-dependent aminotransferase family. Pyridoxal 5'-phosphate serves as cofactor.

The catalysed reaction is glyoxylate + L-serine = 3-hydroxypyruvate + glycine. Its pathway is one-carbon metabolism; formaldehyde assimilation via serine pathway. This chain is Serine--glyoxylate aminotransferase (sgaA), found in Hyphomicrobium methylovorum.